The sequence spans 399 residues: Protochlorophyllide reductase, chloroplastic (399 aa).

A chloroplast-targeting transit peptide spans 1-64; it reads MALQTASMLP…RQKVGAVRAE (64 aa).

The protein belongs to the short-chain dehydrogenases/reductases (SDR) family. POR subfamily.

It is found in the plastid. The protein resides in the chloroplast. It carries out the reaction chlorophyllide a + NADP(+) = protochlorophyllide a + NADPH + H(+). The protein operates within porphyrin-containing compound metabolism; chlorophyll biosynthesis. In terms of biological role, phototransformation of protochlorophyllide (Pchlide) to chlorophyllide (Chlide). The protein is Protochlorophyllide reductase, chloroplastic (3PCR) of Pisum sativum (Garden pea).